The chain runs to 501 residues: NAD(P)H-quinone oxidoreductase chain 4, chloroplastic (501 aa).

Helical transmembrane passes span 4–24 (FPWLTTIVLLPVFAGCVIPFF), 35–55 (YTLGVCLLEFLLITYVFCYYF), 87–107 (IGLILLTGFITTLATLAAWPV), 113–133 (LFYFLMLAMYSGQVGLFASQD), 134–154 (ILLFFFMWELELIPVYLLLCI), 167–187 (FILYTAGGSIFILMGALTMGF), 211–231 (IILYLGFFIAYAVKLPIFPLH), 242–262 (HYSTCMLLAGILLKMGGYGLI), 274–294 (SIFAPWIVAVGAIQIVYAALI), 310–330 (ISHMGFVLIGIGSMTDVGLNG), 331–351 (AILQMVSHGLIGAALFFLAGI), 386–406 (LALPGMSGFVAEFLVFLGIVV), 416–436 (ILVTIIEAIGIILTPIYLLSM), and 464–484 (IFILVCLIFPIVGIGLYPNSV).

It belongs to the complex I subunit 4 family.

It localises to the plastid. The protein resides in the chloroplast thylakoid membrane. The enzyme catalyses a plastoquinone + NADH + (n+1) H(+)(in) = a plastoquinol + NAD(+) + n H(+)(out). It carries out the reaction a plastoquinone + NADPH + (n+1) H(+)(in) = a plastoquinol + NADP(+) + n H(+)(out). The chain is NAD(P)H-quinone oxidoreductase chain 4, chloroplastic from Physcomitrium patens (Spreading-leaved earth moss).